A 273-amino-acid polypeptide reads, in one-letter code: Shikimate dehydrogenase (NADP(+)) (273 aa).

Shikimate is bound by residues 14 to 16 (SKS) and T61. K65 functions as the Proton acceptor in the catalytic mechanism. Position 77 (E77) interacts with NADP(+). Shikimate is bound by residues N86 and D102. NADP(+) contacts are provided by residues 126–130 (GAGGA), 150–155 (NRTLSK), and M214. Y216 provides a ligand contact to shikimate. G238 is a binding site for NADP(+).

This sequence belongs to the shikimate dehydrogenase family. In terms of assembly, homodimer.

It catalyses the reaction shikimate + NADP(+) = 3-dehydroshikimate + NADPH + H(+). Its pathway is metabolic intermediate biosynthesis; chorismate biosynthesis; chorismate from D-erythrose 4-phosphate and phosphoenolpyruvate: step 4/7. In terms of biological role, involved in the biosynthesis of the chorismate, which leads to the biosynthesis of aromatic amino acids. Catalyzes the reversible NADPH linked reduction of 3-dehydroshikimate (DHSA) to yield shikimate (SA). The sequence is that of Shikimate dehydrogenase (NADP(+)) from Photobacterium profundum (strain SS9).